A 279-amino-acid chain; its full sequence is Protein ABIL4 (279 aa).

2 disordered regions span residues 192 to 211 and 219 to 241; these read VHNNINNRTPNKRSNSPMRF and LLKRSSSPSQPKKPPLALPEPQR. The segment covering 194 to 208 has biased composition (polar residues); the sequence is NNINNRTPNKRSNSP. A compositionally biased stretch (low complexity) spans 219–228; it reads LLKRSSSPSQ.

Belongs to the ABI family. Binds SCAR.

It localises to the cytoplasm. The protein resides in the cytoskeleton. Functionally, involved in regulation of actin and microtubule organization. Part of a WAVE complex that activates the Arp2/3 complex. The chain is Protein ABIL4 (ABIL4) from Arabidopsis thaliana (Mouse-ear cress).